A 140-amino-acid chain; its full sequence is PDZ domain-containing protein 11 (140 aa).

The PDZ domain occupies 47–129; the sequence is TITLKKPPGA…ISMRVRFFPY (83 aa).

Interacts with ATP2B1, ATP2B2, ATP2B3, ATP2B4 and ATP7A. Interacts with PLEKHA7 (via WW domains) at zonula adherens; this interaction is essential for the interaction between PLEKHA7 and the ADAM10-binding protein TSPAN33. Interacts with SLC5A6. As to expression, widely expressed (at protein level).

It is found in the secreted. It localises to the cytoplasm. Its subcellular location is the cell junction. The protein resides in the adherens junction. The protein localises to the cell membrane. Functionally, mediates docking of ADAM10 to zonula adherens by interacting with PLEKHA7 which is required for PLEKHA7 to interact with the ADAM10-binding protein TSPAN33. The sequence is that of PDZ domain-containing protein 11 (PDZD11) from Homo sapiens (Human).